Reading from the N-terminus, the 141-residue chain is Large ribosomal subunit protein uL11 (141 aa).

The protein belongs to the universal ribosomal protein uL11 family. Part of the ribosomal stalk of the 50S ribosomal subunit. Interacts with L10 and the large rRNA to form the base of the stalk. L10 forms an elongated spine to which L12 dimers bind in a sequential fashion forming a multimeric L10(L12)X complex. Post-translationally, one or more lysine residues are methylated.

In terms of biological role, forms part of the ribosomal stalk which helps the ribosome interact with GTP-bound translation factors. This is Large ribosomal subunit protein uL11 from Streptococcus agalactiae serotype III (strain NEM316).